The primary structure comprises 237 residues: Orotate phosphoribosyltransferase (237 aa).

Lys29 serves as a coordination point for 5-phospho-alpha-D-ribose 1-diphosphate. 37-38 is an orotate binding site; sequence FF. 5-phospho-alpha-D-ribose 1-diphosphate contacts are provided by residues 79–80, Arg105, Lys106, Lys109, His111, and 130–138; these read YK and DDVMSAGTA. Ser134 and Arg162 together coordinate orotate.

It belongs to the purine/pyrimidine phosphoribosyltransferase family. PyrE subfamily. Homodimer. It depends on Mg(2+) as a cofactor.

The catalysed reaction is orotidine 5'-phosphate + diphosphate = orotate + 5-phospho-alpha-D-ribose 1-diphosphate. It participates in pyrimidine metabolism; UMP biosynthesis via de novo pathway; UMP from orotate: step 1/2. In terms of biological role, catalyzes the transfer of a ribosyl phosphate group from 5-phosphoribose 1-diphosphate to orotate, leading to the formation of orotidine monophosphate (OMP). The polypeptide is Orotate phosphoribosyltransferase (Polaromonas naphthalenivorans (strain CJ2)).